The primary structure comprises 249 residues: Superoxide dismutase 1 copper chaperone (249 aa).

Residues 6-69 form the HMA domain; the sequence is TYEATYAIPM…TLRNCGKDAI (64 aa). Histidine 16 is a binding site for Zn(2+). Residues cysteine 17 and cysteine 20 each coordinate Cu cation. Cysteine 27 and cysteine 64 are joined by a disulfide. Cysteine 229 and cysteine 231 together coordinate Cu cation.

It belongs to the CCS1 family. Homodimer, and heterodimer with apo-SOD1. Zinc-binding at His-16 of CCS1 and 'Glu-43' of apo-SOD1 is required for this heterodimerization. Cu(2+) serves as cofactor.

The protein localises to the cytoplasm. It localises to the mitochondrion intermembrane space. Functionally, copper chaperone for apo superoxide dismutase 1 (SOD1). Binds copper ions and delivers them specifically to apo-SOD1. The protein is Superoxide dismutase 1 copper chaperone (CCS1) of Saccharomyces cerevisiae (strain ATCC 204508 / S288c) (Baker's yeast).